We begin with the raw amino-acid sequence, 32 residues long: Conotoxin pr6d (32 aa).

P5 is subject to 4-hydroxyproline. Cystine bridges form between C7-C20, C14-C25, and C19-C30.

In terms of tissue distribution, expressed by the venom duct.

The protein localises to the secreted. The protein is Conotoxin pr6d of Conus parius (Cone snail).